We begin with the raw amino-acid sequence, 481 residues long: Aromatic amino acid aminotransferase DDB_G0272014 (481 aa).

N6-(pyridoxal phosphate)lysine is present on Lys300.

It belongs to the class-I pyridoxal-phosphate-dependent aminotransferase family. Pyridoxal 5'-phosphate serves as cofactor.

It localises to the cytoplasm. The catalysed reaction is an aromatic L-alpha-amino acid + 2-oxoglutarate = an aromatic oxo-acid + L-glutamate. Its function is as follows. Has aromatic amino acid transaminase activity. The protein is Aromatic amino acid aminotransferase DDB_G0272014 of Dictyostelium discoideum (Social amoeba).